The following is a 157-amino-acid chain: CAPA peptides (157 aa).

A signal peptide spans 1–21; sequence MQPTMRIIVSMALLAYAVASA. The propeptide occupies 22–28; sequence YHSNVKL. Valine 42 is modified (valine amide). Residues 45–66 constitute a propeptide that is removed on maturation; the sequence is ASGNTWQLPLNDLYPEYEPAQV. Glutamine 69 carries the pyrrolidone carboxylic acid; partial modification. Valine amide is present on valine 76. Leucine amide is present on residues leucine 85 and leucine 117. Positions 120-157 are excised as a propeptide; that stretch reads AFKNDDDEITIQNESNDHSEPEQTELIHEDRRKRQTLN. The tract at residues 131–157 is disordered; it reads QNESNDHSEPEQTELIHEDRRKRQTLN. Positions 134 to 151 are enriched in basic and acidic residues; that stretch reads SNDHSEPEQTELIHEDRR.

Belongs to the pyrokinin family. CAPA-periviscerokinin 1: Expressed in corpora cardiaca (CC), corpora allata (CA), antennal lobe (AL) and gnathal ganglion (GNG) (at protein level). Expression detected in most animals in CC and CA and in some animals in AL and GNG (at protein level). CAPA-periviscerokinin 2: Expressed in corpora cardiaca (CC), corpora allata (CA), antennal lobe (AL) and gnathal ganglion (GNG) (at protein level). For non-pyroglutamate form, expression in AL detected in all animals, in CC, CA and GNG in most animals (at protein level). For pyroglutamate form, expression in CC and CA detected in most animals, in AL and GNG in some animals (at protein level). CAPA-periviscerokinin 3: Expressed in corpora cardiaca (CC), corpora allata (CA), antennal lobe (AL) and gnathal ganglion (GNG). Expression detected in most animals in CC and CA and in some animals in AL and GNG (at protein level). CAPA-precursor-related peptide 3: Expressed in corpora cardiaca (CC), corpora allata (CA), antennal lobe (AL) and gnathal ganglion (GNG) (at protein level). Expression in CC and CA detected in some animals, expression in Al and GNG detected in few animals (at protein level). CAPA-trypto-pyrokinin: Expressed in corpora cardiaca (CC), corpora allata (CA), antennal lobe (AL) and gnathal ganglion (GNG) (at protein level). Expression in CC, CA and GNG detected in most animals, in AL in some animals (at protein level).

The protein localises to the secreted. Its function is as follows. Myoactive. This is CAPA peptides from Agrotis ipsilon (Black cutworm moth).